The chain runs to 149 residues: Hydroalkoxylation enzyme phnH (149 aa).

The N-terminal stretch at 1–18 (MKFTYLVSLAAFAVTALG) is a signal peptide. N-linked (GlcNAc...) asparagine glycosylation is found at Asn-33 and Asn-127.

As to quaternary structure, homotetramer.

It carries out the reaction 2,4,7,9-tetrahydroxy-6-methyl-8-(2-methylbut-3-en-2-yl)-1-oxo-1H-phenalen-3-ol = (2'R)-atrovenetin. The protein operates within secondary metabolite biosynthesis. Its function is as follows. Hydroalkoxylation enzyme; part of the gene cluster that mediates the biosynthesis of phenalenones such as herqueinone, compounds that have been reported to treat tumors, bacterial infections and/or mycoses, and rheumatic diseases. The non-reducing polyketide synthase phnA synthesizes the heptaketide backbone and cyclizes it into the angular, hemiketal-containing naphtho-gamma-pyrone prephenalenone. The product template (PT) domain of phnA catalyzes only the C4-C9 aldol condensation, which is unprecedented among known PT domains. The transformation of prephenalenone to phenalenones requires an FAD-dependent monooxygenase phnB, which catalyzes the C2 aromatic hydroxylation of prephenalenone and ring opening of the gamma-pyrone ring simultaneously. Subsequent intramolecular deprotonation of C3 phenolic oxygen accelerates phenalenone ring closure to yield the tricyclic phenalenone core with a C2 hydroxylation. The prenyltransferase phnF further catalyzes reverse C-prenylation of phenalenone by direct electrophilic substitution at C6, or possibly via first a forward O-prenylation of a neighboring phenol in phenalenone, followed by a Claisen rearrangement. The hydroalkoxylation enzyme phnH catalyzes the 5-exo-trig cyclization via acid catalysis after the spontaneous deprotonation of 7-OH, which leads to the formation of the dihydrobenzofuran atrovenetin. Atrovenetin is further converted to deoxyherqueinone by the O-methyltransferase phnC which can methylate C2-OH to stabilize the northern portion of the phenalenone core. Finally, the oxidoreductase phnG converts deoxyherqueinone to herqueinone via C6 hydroxylation. The sequence is that of Hydroalkoxylation enzyme phnH from Penicillium herquei.